The following is a 426-amino-acid chain: Enolase (426 aa).

Gln163 is a binding site for (2R)-2-phosphoglycerate. The Proton donor role is filled by Glu205. Residues Asp242, Glu283, and Asp310 each coordinate Mg(2+). Residues Lys335, Arg364, Ser365, and Lys386 each coordinate (2R)-2-phosphoglycerate. The active-site Proton acceptor is the Lys335.

Belongs to the enolase family. Mg(2+) is required as a cofactor.

The protein localises to the cytoplasm. The protein resides in the secreted. It is found in the cell surface. It catalyses the reaction (2R)-2-phosphoglycerate = phosphoenolpyruvate + H2O. Its pathway is carbohydrate degradation; glycolysis; pyruvate from D-glyceraldehyde 3-phosphate: step 4/5. Its function is as follows. Catalyzes the reversible conversion of 2-phosphoglycerate (2-PG) into phosphoenolpyruvate (PEP). It is essential for the degradation of carbohydrates via glycolysis. The chain is Enolase from Cutibacterium acnes (strain DSM 16379 / KPA171202) (Propionibacterium acnes).